We begin with the raw amino-acid sequence, 1978 residues long: Sodium channel protein type 8 subunit alpha (1978 aa).

2 disordered regions span residues methionine 1 to glutamate 20 and arginine 28 to glycine 62. Residues methionine 1 to serine 132 lie on the Cytoplasmic side of the membrane. Residues arginine 28–alanine 61 show a composition bias toward basic and acidic residues. The stretch at isoleucine 114–glutamine 442 is one I repeat. Residues valine 133–phenylalanine 151 form a helical membrane-spanning segment. Topologically, residues serine 152–serine 158 are extracellular. The helical transmembrane segment at lysine 159–alanine 179 threads the bilayer. Topologically, residues arginine 180–proline 193 are cytoplasmic. The chain crosses the membrane as a helical span at residues tryptophan 194–valine 211. Over aspartate 212–serine 217 the chain is Extracellular. Asparagine 215 is a glycosylation site (N-linked (GlcNAc...) asparagine). The helical transmembrane segment at alanine 218–isoleucine 234 threads the bilayer. At proline 235 to aspartate 253 the chain is on the cytoplasmic side. Residues valine 254–phenylalanine 273 form a helical membrane-spanning segment. The Extracellular segment spans residues methionine 274–threonine 355. Residues cysteine 281 and cysteine 333 are joined by a disulfide bond. Residues asparagine 289, asparagine 295, asparagine 308, and asparagine 326 are each glycosylated (N-linked (GlcNAc...) asparagine). The pore-forming intramembrane region spans phenylalanine 356–leucine 380. Glutamate 373 lines the Na(+) pocket. The Extracellular segment spans residues arginine 381 to tyrosine 387. A helical transmembrane segment spans residues methionine 388–alanine 408. Over valine 409 to proline 751 the chain is Cytoplasmic. Disordered regions lie at residues alanine 446–arginine 530 and aspartate 576–arginine 597. A compositionally biased stretch (low complexity) spans serine 473 to lysine 486. Residues lysine 489–glutamine 500 are compositionally biased toward basic residues. Basic and acidic residues-rich tracts occupy residues lysine 501–arginine 530 and aspartate 586–arginine 597. Phosphoserine is present on residues serine 518 and serine 520. The II repeat unit spans residues cysteine 733–glycine 1005. Residues phenylalanine 752 to methionine 770 traverse the membrane as a helical segment. Over glutamate 771–histidine 781 the chain is Extracellular. The chain crosses the membrane as a helical span at residues valine 782 to lysine 801. The Cytoplasmic segment spans residues leucine 802–tryptophan 815. The chain crosses the membrane as a helical span at residues asparagine 816–valine 835. At glutamate 836–glycine 837 the chain is on the extracellular side. A helical transmembrane segment spans residues leucine 838 to serine 855. The Cytoplasmic portion of the chain corresponds to tryptophan 856 to glycine 871. The chain crosses the membrane as a helical span at residues alanine 872–valine 890. Over glycine 891–aspartate 919 the chain is Extracellular. Cysteine 904 and cysteine 910 are joined by a disulfide. The pore-forming intramembrane region spans phenylalanine 920–tryptophan 940. Na(+) is bound by residues glutamate 934 and glutamate 937. The Extracellular portion of the chain corresponds to aspartate 941–isoleucine 953. Residues cysteine 942 and cysteine 951 are joined by a disulfide bond. A helical membrane pass occupies residues valine 954–leucine 974. Residues leucine 975–tryptophan 1197 lie on the Cytoplasmic side of the membrane. The segment at asparagine 1105–valine 1146 is disordered. An III repeat occupies leucine 1178–leucine 1493. A helical membrane pass occupies residues phenylalanine 1198–phenylalanine 1215. At glutamate 1216–threonine 1228 the chain is on the extracellular side. The chain crosses the membrane as a helical span at residues isoleucine 1229–leucine 1247. Over lysine 1248–alanine 1261 the chain is Cytoplasmic. The chain crosses the membrane as a helical span at residues tryptophan 1262–asparagine 1280. Topologically, residues alanine 1281–glycine 1288 are extracellular. A helical transmembrane segment spans residues alanine 1289–arginine 1307. Topologically, residues phenylalanine 1308–serine 1324 are cytoplasmic. The helical transmembrane segment at isoleucine 1325 to valine 1344 threads the bilayer. Topologically, residues asparagine 1345 to valine 1397 are extracellular. Cysteine 1354 and cysteine 1374 form a disulfide bridge. N-linked (GlcNAc...) asparagine glycosylation is found at asparagine 1356, asparagine 1370, and asparagine 1381. The pore-forming intramembrane region spans glycine 1398 to alanine 1419. The Extracellular portion of the chain corresponds to alanine 1420–isoleucine 1436. A helical membrane pass occupies residues tyrosine 1437 to isoleucine 1458. The Cytoplasmic segment spans residues glycine 1459–alanine 1521. Serine 1495 bears the Phosphoserine; by PKC mark. One copy of the IV repeat lies at isoleucine 1502–glutamine 1799. Residues phenylalanine 1522–valine 1539 traverse the membrane as a helical segment. Residues glutamate 1540–asparagine 1550 lie on the Extracellular side of the membrane. The helical transmembrane segment at isoleucine 1551–leucine 1569 threads the bilayer. At lysine 1570–isoleucine 1581 the chain is on the cytoplasmic side. Residues glycine 1582 to phenylalanine 1599 form a helical membrane-spanning segment. The Extracellular portion of the chain corresponds to leucine 1600 to threonine 1612. A helical transmembrane segment spans residues leucine 1613–isoleucine 1629. Over lysine 1630–alanine 1648 the chain is Cytoplasmic. The helical transmembrane segment at leucine 1649–phenylalanine 1666 threads the bilayer. Topologically, residues glycine 1667 to threonine 1688 are extracellular. The segment at residues phenylalanine 1689 to proline 1711 is an intramembrane region (pore-forming). The Extracellular segment spans residues isoleucine 1712–glycine 1740. A disulfide bridge links cysteine 1719 with cysteine 1734. The helical transmembrane segment at isoleucine 1741–isoleucine 1763 threads the bilayer. Topologically, residues leucine 1764 to cysteine 1978 are cytoplasmic. An IQ domain is found at glutamate 1893–lysine 1922. The disordered stretch occupies residues leucine 1923 to cysteine 1978. Residues threonine 1936 to serine 1947 show a composition bias toward polar residues. Over residues threonine 1949–cysteine 1978 the composition is skewed to basic and acidic residues.

Belongs to the sodium channel (TC 1.A.1.10) family. Nav1.6/SCN8A subfamily. As to quaternary structure, the voltage-sensitive sodium channel consists of an ion-conducting pore-forming alpha subunit regulated by one or more beta-1 (SCN1B), beta-2 (SCN2B), beta-3 (SCN3B) and/or beta-4 (SCN4B) subunits. Beta-1 (SCN1B) and beta-3 (SCN3B) are non-covalently associated with alpha, while beta-2 (SCN2B) and beta-4 (SCN4B) are covalently linked by disulfide bonds. Interacts with NEDD4 and NEDD4L. Interacts with FGF13. Interacts with FGF14, GBG3, GBB2 and SCN1B. Interacts with TMEM233. Interacts with the conotoxin GVIIJ. Interacts with CALM1; the interaction modulates the inactivation rate of SCN8A. In terms of processing, may be ubiquitinated by NEDD4L; which would promote its endocytosis. Phosphorylation at Ser-1495 by PKC in a highly conserved cytoplasmic loop slows inactivation of the sodium channel and reduces peak sodium currents. In terms of tissue distribution, isoform 1 is highly expressed in brain, moderately in spinal cord, and at low levels in dorsal root ganglia, nodose ganglia and superior cervical ganglia. Not detected in sciatic nerve and non-neuronal tissues. Isoform 2 is hardly detectable, if at all, in brain, expressed at low levels in spinal cord and at highest levels in dorsal root ganglia.

It is found in the cell membrane. It localises to the cell projection. The protein resides in the axon. The catalysed reaction is Na(+)(in) = Na(+)(out). Functionally, pore-forming subunit of a voltage-gated sodium channel complex assuming opened or closed conformations in response to the voltage difference across membranes and through which sodium ions selectively pass along their electrochemical gradient. Contributes to neuronal excitability by regulating action potential threshold and propagation. In Rattus norvegicus (Rat), this protein is Sodium channel protein type 8 subunit alpha.